The following is a 507-amino-acid chain: MSYKEKAVKGVSWHLLSYFLAAPIAYLVRVLYANEIPKLDVGLFYAVLDFFSMLVVFRAFGLDQALIRYIPKYLAENRLDMLKSSIVFVGILQTILAFIVAFLVVIFAPYIAEFYINNQGQFTGRLDLVINILIIMAMGYYFLDSIVAFFSNILTGFQLQNYASSTRVVRILSVFIFSLIFIYLFNVHNAYVPSVSYLLMAVVMIIIYGYIVVKKIFPKFAKEKVIFSRKLIRNLFSYGMYVMIGYAGSLILGYLDGICLTYFTGLNAVADYRNVAMPTVNILSYFAFSVGAVLFPMSSELWEKGYKKALSYGVEKVFLYSLIIVTPLAILMAYFPTVIINILFNPKYLSAAPAIQILSFGAMFLTFNSIGFNILNGIGRPNISTKILYIGASFNLIFNILLIPKFGIIGAAITTVFGYFIMWIFQIWFLNKLLEHQFLNKKWILVILVGIFSLIPVMFIKDLIDNVILQLFVCGVVYFGIYILGIFGLKIINIYEVKDIISKIIKR.

Helical transmembrane passes span 8–28 (VKGV…AYLV), 41–61 (VGLF…RAFG), 86–106 (IVFV…LVVI), 130–150 (INIL…VAFF), 171–191 (ILSV…HNAY), 193–213 (PSVS…YIVV), 235–255 (LFSY…LGYL), 275–295 (VAMP…AVLF), 323–343 (IIVT…INIL), 355–375 (IQIL…FNIL), 387–407 (ILYI…PKFG), 408–428 (IIGA…FQIW), 444–464 (ILVI…KDLI), and 467–487 (VILQ…LGIF).

Belongs to the polysaccharide synthase family.

The protein resides in the cell membrane. This is an uncharacterized protein from Methanocaldococcus jannaschii (strain ATCC 43067 / DSM 2661 / JAL-1 / JCM 10045 / NBRC 100440) (Methanococcus jannaschii).